The sequence spans 346 residues: Tetraacyldisaccharide 4'-kinase (346 aa).

ATP is bound at residue 54-61 (TVGGAGKT).

It belongs to the LpxK family.

It carries out the reaction a lipid A disaccharide + ATP = a lipid IVA + ADP + H(+). It functions in the pathway glycolipid biosynthesis; lipid IV(A) biosynthesis; lipid IV(A) from (3R)-3-hydroxytetradecanoyl-[acyl-carrier-protein] and UDP-N-acetyl-alpha-D-glucosamine: step 6/6. Functionally, transfers the gamma-phosphate of ATP to the 4'-position of a tetraacyldisaccharide 1-phosphate intermediate (termed DS-1-P) to form tetraacyldisaccharide 1,4'-bis-phosphate (lipid IVA). In Rhizobium etli (strain ATCC 51251 / DSM 11541 / JCM 21823 / NBRC 15573 / CFN 42), this protein is Tetraacyldisaccharide 4'-kinase.